A 188-amino-acid polypeptide reads, in one-letter code: dCTP deaminase (188 aa).

DCTP is bound by residues 111-116 (KSTYAR), 135-137 (TLE), Gln-156, Tyr-170, and Gln-180. Catalysis depends on Glu-137, which acts as the Proton donor/acceptor.

This sequence belongs to the dCTP deaminase family. In terms of assembly, homotrimer.

The enzyme catalyses dCTP + H2O + H(+) = dUTP + NH4(+). It participates in pyrimidine metabolism; dUMP biosynthesis; dUMP from dCTP (dUTP route): step 1/2. Its function is as follows. Catalyzes the deamination of dCTP to dUTP. This Nitrosomonas eutropha (strain DSM 101675 / C91 / Nm57) protein is dCTP deaminase.